We begin with the raw amino-acid sequence, 504 residues long: Ribose import ATP-binding protein RbsA 3 (504 aa).

2 consecutive ABC transporter domains span residues 6 to 238 and 251 to 494; these read ANLK…VGRP and IGAE…MMGG. 38–45 lines the ATP pocket; sequence GENGAGKS.

This sequence belongs to the ABC transporter superfamily. Ribose importer (TC 3.A.1.2.1) family. As to quaternary structure, the complex is composed of an ATP-binding protein (RbsA), two transmembrane proteins (RbsC) and a solute-binding protein (RbsB).

It localises to the cell inner membrane. The enzyme catalyses D-ribose(out) + ATP + H2O = D-ribose(in) + ADP + phosphate + H(+). Part of the ABC transporter complex RbsABC involved in ribose import. Responsible for energy coupling to the transport system. The sequence is that of Ribose import ATP-binding protein RbsA 3 from Rhizobium meliloti (strain 1021) (Ensifer meliloti).